Consider the following 67-residue polypeptide: Beta-defensin 103A (67 aa).

The first 22 residues, 1–22 (MRIHFLLFALLFLFLMPVPGNG), serve as a signal peptide directing secretion. Cystine bridges form between C33–C62, C40–C55, and C45–C63.

It belongs to the beta-defensin family.

It is found in the secreted. Exhibits antimicrobial activity against Gram-positive and Gram-negative bacteria. The sequence is that of Beta-defensin 103A (DEFB103A) from Equus caballus (Horse).